A 368-amino-acid polypeptide reads, in one-letter code: sn-1 linoleoyl-lipid 6-desaturase (368 aa).

The next 2 membrane-spanning stretches (helical) occupy residues 47–67 (IILAWVVSAWTFVVFGPDVLW) and 68–88 (MKLLGCIVLGFGVSAVGFNIS). The short motif at 89-93 (HDGNH) is the Histidine box-1 element. The Histidine box-2 motif lies at 124–129 (HNVLHH). A run of 3 helical transmembrane segments spans residues 164-184 (WFIWFVYPFIPYYWSIADVQT), 204-224 (IATLLAFKAFGVAVFLIIPIA), and 233-253 (VIGASIVYMTHGLVACVVFML). Positions 305-309 (HHLFP) match the Histidine box-3 motif.

Belongs to the fatty acid desaturase type 2 family. It depends on Fe(2+) as a cofactor.

Its subcellular location is the cell inner membrane. The protein resides in the cellular thylakoid membrane. The enzyme catalyses a 1-[(9Z,12Z)-octadecdienoyl]-2-acyl-glycerolipid + 2 reduced [2Fe-2S]-[ferredoxin] + O2 + 2 H(+) = a 1-[(6Z,9Z,12Z)-octadectrienoyl]-2-acyl-glycerolipid + 2 oxidized [2Fe-2S]-[ferredoxin] + 2 H2O. It participates in lipid metabolism; polyunsaturated fatty acid biosynthesis. Its activity is regulated as follows. Activity requires ferredoxin, which is the natural electron donor, or cytochrome b5. In addition, activity is increased in the presence of the intermediate electron donors, NADPH and FADH(2). Its function is as follows. Desaturase involved in fatty acid biosynthesis. Introduces a double bond at carbon 6 of linoleoyl group (18:2) attached to the sn-1 position of the glycerol moiety of membrane glycerolipids, leading to the formation of gamma-linolenic acid (GLA). The protein is sn-1 linoleoyl-lipid 6-desaturase of Arthrospira platensis (Spirulina platensis).